The following is a 381-amino-acid chain: KRR1 small subunit processome component homolog (381 aa).

The interval 1-51 (MASPSLERPEKGAGKSEFRNQKPKPENQDESELLTVPDGWKEPAFSKEDNP) is disordered. Position 2 is an N-acetylalanine (A2). Residues S3 and S5 each carry the phosphoserine modification. Basic and acidic residues-rich tracts occupy residues 7–27 (ERPEKGAGKSEFRNQKPKPEN) and 39–51 (GWKEPAFSKEDNP). K24 participates in a covalent cross-link: Glycyl lysine isopeptide (Lys-Gly) (interchain with G-Cter in SUMO2). In terms of domain architecture, KH spans 154 to 206 (KERFVKRRQRLIGPKGSTLKALELLTNCYIMVQGNTVSAIGPFSGLKEVRKVV). Residues 250–262 (NVNKRKEPKKKTV) are compositionally biased toward basic residues. 2 disordered regions span residues 250–278 (NVNKRKEPKKKTVKKEYTPFPPPQPESQI) and 309–338 (AISKRQEERNKAFIPPKEKPIVKPKEASTE). Residues K340 and K369 each participate in a glycyl lysine isopeptide (Lys-Gly) (interchain with G-Cter in SUMO2) cross-link.

The protein belongs to the KRR1 family. In terms of assembly, part of the small subunit (SSU) processome, composed of more than 70 proteins and the RNA chaperone small nucleolar RNA (snoRNA) U3. (Microbial infection) Directly interacts with HIV-1 protein VPR. Also identified in a complex with NR3C1 and HIV-1 protein VPR.

The protein resides in the nucleus. It localises to the nucleolus. Its subcellular location is the cytoplasm. In terms of biological role, part of the small subunit (SSU) processome, first precursor of the small eukaryotic ribosomal subunit. During the assembly of the SSU processome in the nucleolus, many ribosome biogenesis factors, an RNA chaperone and ribosomal proteins associate with the nascent pre-rRNA and work in concert to generate RNA folding, modifications, rearrangements and cleavage as well as targeted degradation of pre-ribosomal RNA by the RNA exosome. The sequence is that of KRR1 small subunit processome component homolog from Homo sapiens (Human).